A 370-amino-acid chain; its full sequence is MTTKEKNKSSNSPPPTSFSSLPDDIVLNCLARVSRFHYPTLSLVCKGFRSLLDSRELHATRSCIGKTESFLYVCLDLHRNCYPDCPPRWFIVSPITKQKLKPIPSVTCQSSTVVSIGSKIYIIGGFVDGHSSRRLIVLDCPSHGWRRLPEMRVPRQNAAADVINDKIYVIGGSSSNNIEDWGEVYDPKTQTWEPVLPTTLDLTVQMSVVPGSLVMSGKVYDMNGLKLNFQKNICLVEIENMMCQTKVCEGVLVWCEPEEDRGWCPVDGLEGLPNRPTSPGYLTSVAHSDRGRRVTVWWESAVLHRLGPKWTKECKTEIWCAEISFERRGVGKVCGFVEWSKNVFTKDDYKTYKLPASLSDFFLNSTIVTY.

Residues 15–61 form the F-box domain; the sequence is PTSFSSLPDDIVLNCLARVSRFHYPTLSLVCKGFRSLLDSRELHATR. 2 Kelch repeats span residues 119–165 and 167–212; these read KIYI…VIND and IYVI…VPGS.

The protein is Putative F-box/kelch-repeat protein At3g46050 of Arabidopsis thaliana (Mouse-ear cress).